A 634-amino-acid chain; its full sequence is Biosynthetic arginine decarboxylase (634 aa).

Lys103 bears the N6-(pyridoxal phosphate)lysine mark. 283 to 293 (FDVGGGLGVDY) is a binding site for substrate.

The protein belongs to the Orn/Lys/Arg decarboxylase class-II family. SpeA subfamily. Mg(2+) serves as cofactor. It depends on pyridoxal 5'-phosphate as a cofactor.

It catalyses the reaction L-arginine + H(+) = agmatine + CO2. It participates in amine and polyamine biosynthesis; agmatine biosynthesis; agmatine from L-arginine: step 1/1. Its function is as follows. Catalyzes the biosynthesis of agmatine from arginine. The polypeptide is Biosynthetic arginine decarboxylase (Photorhabdus laumondii subsp. laumondii (strain DSM 15139 / CIP 105565 / TT01) (Photorhabdus luminescens subsp. laumondii)).